Here is a 186-residue protein sequence, read N- to C-terminus: Probable nicotinate-nucleotide adenylyltransferase (186 aa).

The protein belongs to the NadD family.

The catalysed reaction is nicotinate beta-D-ribonucleotide + ATP + H(+) = deamido-NAD(+) + diphosphate. Its pathway is cofactor biosynthesis; NAD(+) biosynthesis; deamido-NAD(+) from nicotinate D-ribonucleotide: step 1/1. In terms of biological role, catalyzes the reversible adenylation of nicotinate mononucleotide (NaMN) to nicotinic acid adenine dinucleotide (NaAD). This is Probable nicotinate-nucleotide adenylyltransferase from Thermus thermophilus (strain ATCC 27634 / DSM 579 / HB8).